The following is a 100-amino-acid chain: Urease subunit gamma (100 aa).

It belongs to the urease gamma subunit family. Heterotrimer of UreA (gamma), UreB (beta) and UreC (alpha) subunits. Three heterotrimers associate to form the active enzyme.

It localises to the cytoplasm. It catalyses the reaction urea + 2 H2O + H(+) = hydrogencarbonate + 2 NH4(+). It functions in the pathway nitrogen metabolism; urea degradation; CO(2) and NH(3) from urea (urease route): step 1/1. This is Urease subunit gamma from Thioalkalivibrio sulfidiphilus (strain HL-EbGR7).